The chain runs to 550 residues: Chaperonin GroEL (550 aa).

ATP-binding positions include 29–32 (TAGP), Lys50, 86–90 (DGTTT), Gly418, and Asp499.

The protein belongs to the chaperonin (HSP60) family. As to quaternary structure, forms a cylinder of 14 subunits composed of two heptameric rings stacked back-to-back. Interacts with the co-chaperonin GroES.

It is found in the cytoplasm. It carries out the reaction ATP + H2O + a folded polypeptide = ADP + phosphate + an unfolded polypeptide.. In terms of biological role, together with its co-chaperonin GroES, plays an essential role in assisting protein folding. The GroEL-GroES system forms a nano-cage that allows encapsulation of the non-native substrate proteins and provides a physical environment optimized to promote and accelerate protein folding. This is Chaperonin GroEL from Wolbachia sp. subsp. Brugia malayi (strain TRS).